We begin with the raw amino-acid sequence, 208 residues long: Outer-membrane lipoprotein carrier protein (208 aa).

The N-terminal stretch at 1–25 (MKKLFSAKLFSALVLSFSLFSTAHA) is a signal peptide.

The protein belongs to the LolA family. In terms of assembly, monomer.

The protein resides in the periplasm. Participates in the translocation of lipoproteins from the inner membrane to the outer membrane. Only forms a complex with a lipoprotein if the residue after the N-terminal Cys is not an aspartate (The Asp acts as a targeting signal to indicate that the lipoprotein should stay in the inner membrane). This Vibrio campbellii (strain ATCC BAA-1116) protein is Outer-membrane lipoprotein carrier protein.